Consider the following 290-residue polypeptide: MAPKRQSPLPPQKKKPRPPPALGPEETSASAGLPKKGEKEQQEAIEHIDEVQNEIDRLNEQASEEILKVEQKYNKLRQPFFQKRSELIAKIPNFWVTTFVNHPQVSALLGEEDEEALHYLTRVEVTEFEDIKSGYRIDFYFDENPYFENKVLSKEFHLNESGDPSSKSTEIKWKSGKDLTKRSSQTQNKASRKRQHEEPESFFTWFTDHSDAGADELGEVIKDDIWPNPLQYYLVPDMDDEEGEGEEDDDDDEEEEGLEDIDEEGDEDEGEEDEDDDEGEEGEEDEGEDD.

Residues 1 to 45 (MAPKRQSPLPPQKKKPRPPPALGPEETSASAGLPKKGEKEQQEAI) form a disordered region. Position 2 is a n,N,N-trimethylalanine (Ala2). At Ser7 the chain carries Phosphoserine. Pro11 bears the N6-acetyllysine mark. Lys15, Pro24, and Ser28 each carry phosphoserine. The segment at 31-78 (AGLPKKGEKEQQEAIEHIDEVQNEIDRLNEQASEEILKVEQKYNKLRQ) is dimerization. The segment covering 35–45 (KKGEKEQQEAI) has biased composition (basic and acidic residues). Ser63 is subject to Phosphoserine. Lys68 is modified (N6-acetyllysine). The segment at 79–225 (PFFQKRSELI…ELGEVIKDDI (147 aa)) is earmuff domain. At Tyr146 the chain carries Phosphotyrosine. Position 150 is an N6-acetyllysine (Lys150). Lys154 is covalently cross-linked (Glycyl lysine isopeptide (Lys-Gly) (interchain with G-Cter in ubiquitin)). 2 disordered regions span residues 158–207 (LNES…TWFT) and 236–290 (PDMD…GEDD). Residues 169–181 (TEIKWKSGKDLTK) show a composition bias toward basic and acidic residues. An N6-acetyllysine modification is found at Lys172. A compositionally biased stretch (acidic residues) spans 237-290 (DMDDEEGEGEEDDDDDEEEEGLEDIDEEGDEDEGEEDEDDDEGEEGEEDEGEDD).

It belongs to the nucleosome assembly protein (NAP) family. As to quaternary structure, headphone-shaped homodimer. Isoforms 1 and 2 interact directly with each other and with ANP32A within the tripartite INHAT (inhibitor of acetyltransferases) complex. Isoform 1 and isoform 2 interact also with histones. Isoform 2 is a component of the SET complex, composed of at least ANP32A, APEX1, HMGB2, NME1, SET and TREX1, but not NME2 or TREX2. Within this complex, directly interacts with ANP32A, NME1, HMGB2 and TREX1; the interaction with ANP32A is enhanced after cleavage. Interacts with APBB1, CHTOP, SETBP1, SGO1. (Microbial infection) Interacts with herpes simplex virus 1 VP22. Post-translationally, isoform 2 is phosphorylated on Ser-15 and Ser-24. In terms of processing, isoform 2 is acetylated on Lys-11. Some glutamate residues are glycylated by TTLL8. This modification occurs exclusively on glutamate residues and results in a glycine chain on the gamma-carboxyl group. Post-translationally, N-terminus of isoform 1 is methylated by METTL11A/NTM1. Mainly trimethylated. In terms of processing, cleaved after Lys-176 by GZMA. The cleavage inhibits its nucleosome assembly activity and disrupts the inhibition on NME1. In terms of tissue distribution, widely expressed. Low levels in quiescent cells during serum starvation, contact inhibition or differentiation. Highly expressed in Wilms' tumor.

The protein localises to the cytoplasm. Its subcellular location is the cytosol. It is found in the endoplasmic reticulum. It localises to the nucleus. The protein resides in the nucleoplasm. Multitasking protein, involved in apoptosis, transcription, nucleosome assembly and histone chaperoning. Isoform 2 anti-apoptotic activity is mediated by inhibition of the GZMA-activated DNase, NME1. In the course of cytotoxic T-lymphocyte (CTL)-induced apoptosis, GZMA cleaves SET, disrupting its binding to NME1 and releasing NME1 inhibition. Isoform 1 and isoform 2 are potent inhibitors of protein phosphatase 2A. Isoform 1 and isoform 2 inhibit EP300/CREBBP and PCAF-mediated acetylation of histones (HAT) and nucleosomes, most probably by masking the accessibility of lysines of histones to the acetylases. The predominant target for inhibition is histone H4. HAT inhibition leads to silencing of HAT-dependent transcription and prevents active demethylation of DNA. Both isoforms stimulate DNA replication of the adenovirus genome complexed with viral core proteins; however, isoform 2 specific activity is higher. The protein is Protein SET (SET) of Homo sapiens (Human).